The following is a 227-amino-acid chain: Leucyl/phenylalanyl-tRNA--protein transferase (227 aa).

This sequence belongs to the L/F-transferase family.

The protein localises to the cytoplasm. It carries out the reaction N-terminal L-lysyl-[protein] + L-leucyl-tRNA(Leu) = N-terminal L-leucyl-L-lysyl-[protein] + tRNA(Leu) + H(+). The catalysed reaction is N-terminal L-arginyl-[protein] + L-leucyl-tRNA(Leu) = N-terminal L-leucyl-L-arginyl-[protein] + tRNA(Leu) + H(+). The enzyme catalyses L-phenylalanyl-tRNA(Phe) + an N-terminal L-alpha-aminoacyl-[protein] = an N-terminal L-phenylalanyl-L-alpha-aminoacyl-[protein] + tRNA(Phe). Its function is as follows. Functions in the N-end rule pathway of protein degradation where it conjugates Leu, Phe and, less efficiently, Met from aminoacyl-tRNAs to the N-termini of proteins containing an N-terminal arginine or lysine. The chain is Leucyl/phenylalanyl-tRNA--protein transferase from Afipia carboxidovorans (strain ATCC 49405 / DSM 1227 / KCTC 32145 / OM5) (Oligotropha carboxidovorans).